The following is a 122-amino-acid chain: Nitrogen fixation nifHD region GlnB-like protein 2 (122 aa).

This sequence belongs to the P(II) protein family.

In terms of biological role, could be involved in the regulation of nitrogen fixation. The sequence is that of Nitrogen fixation nifHD region GlnB-like protein 2 (glnBB) from Methanobacterium ivanovii.